A 39-amino-acid chain; its full sequence is Cytochrome b559 subunit beta (39 aa).

The chain crosses the membrane as a helical span at residues 14-30 (WLAIHGLAVPTVFFLGS). Position 18 (His18) interacts with heme.

As to quaternary structure, heterodimer of an alpha subunit and a beta subunit. PSII is composed of 1 copy each of membrane proteins PsbA, PsbB, PsbC, PsbD, PsbE, PsbF, PsbH, PsbI, PsbJ, PsbK, PsbL, PsbM, PsbT, PsbX, PsbY, PsbZ, Psb30/Ycf12, at least 3 peripheral proteins of the oxygen-evolving complex and a large number of cofactors. It forms dimeric complexes. Requires heme b as cofactor. The N-terminus is blocked.

Its subcellular location is the plastid. The protein localises to the chloroplast thylakoid membrane. Its function is as follows. This b-type cytochrome is tightly associated with the reaction center of photosystem II (PSII). PSII is a light-driven water:plastoquinone oxidoreductase that uses light energy to abstract electrons from H(2)O, generating O(2) and a proton gradient subsequently used for ATP formation. It consists of a core antenna complex that captures photons, and an electron transfer chain that converts photonic excitation into a charge separation. The sequence is that of Cytochrome b559 subunit beta from Spinacia oleracea (Spinach).